The primary structure comprises 162 residues: NADH-quinone oxidoreductase subunit I (162 aa).

4Fe-4S ferredoxin-type domains are found at residues 52–82 (LRRY…IEAG) and 93–122 (TRYD…EGPN). [4Fe-4S] cluster-binding residues include Cys-62, Cys-65, Cys-68, Cys-72, Cys-102, Cys-105, Cys-108, and Cys-112.

It belongs to the complex I 23 kDa subunit family. As to quaternary structure, NDH-1 is composed of 14 different subunits. Subunits NuoA, H, J, K, L, M, N constitute the membrane sector of the complex. Requires [4Fe-4S] cluster as cofactor.

Its subcellular location is the cell inner membrane. It catalyses the reaction a quinone + NADH + 5 H(+)(in) = a quinol + NAD(+) + 4 H(+)(out). NDH-1 shuttles electrons from NADH, via FMN and iron-sulfur (Fe-S) centers, to quinones in the respiratory chain. The immediate electron acceptor for the enzyme in this species is believed to be ubiquinone. Couples the redox reaction to proton translocation (for every two electrons transferred, four hydrogen ions are translocated across the cytoplasmic membrane), and thus conserves the redox energy in a proton gradient. In Xanthobacter autotrophicus (strain ATCC BAA-1158 / Py2), this protein is NADH-quinone oxidoreductase subunit I.